We begin with the raw amino-acid sequence, 300 residues long: MPDTLIVLIGPTGVGKTELSLSIAEHFRTSIVSADSRQLYADLKIGTAAPTPEQLARVPHYFVGTLQLTDYYSAAQYEADVLAQLEILYQNHDTVILTGGSMMYIDAICKGIDDIPTVDNETRQLMLRRYEQEGLDTLCAELRLLDPEYYKIVDLKNPKRVIHALEICYMTGKTYTSFRTRTHKERPFRIIKIGLTRDREELYDRINRRVDIMMQDGLLEEARQVYPFRHLNSLNTVGYKEMFKYLDGEWTLEFAIGKIKQNSRIYSRKQMTWFKRDKDIVWFHPDQQTEIMQYIHSVNH.

Residue 10–17 (GPTGVGKT) participates in ATP binding. A substrate-binding site is contributed by 12-17 (TGVGKT). The interval 35-38 (DSRQ) is interaction with substrate tRNA.

It belongs to the IPP transferase family. In terms of assembly, monomer. It depends on Mg(2+) as a cofactor.

The enzyme catalyses adenosine(37) in tRNA + dimethylallyl diphosphate = N(6)-dimethylallyladenosine(37) in tRNA + diphosphate. Catalyzes the transfer of a dimethylallyl group onto the adenine at position 37 in tRNAs that read codons beginning with uridine, leading to the formation of N6-(dimethylallyl)adenosine (i(6)A). This Phocaeicola vulgatus (strain ATCC 8482 / DSM 1447 / JCM 5826 / CCUG 4940 / NBRC 14291 / NCTC 11154) (Bacteroides vulgatus) protein is tRNA dimethylallyltransferase 1.